Here is a 166-residue protein sequence, read N- to C-terminus: Interferon gamma-related (166 aa).

The first 26 residues, 1 to 26, serve as a signal peptide directing secretion; sequence MYCRLNMVYLICALLLIVSLQGTVGA. Residue N91 is glycosylated (N-linked (GlcNAc...) asparagine).

This sequence belongs to the type II (or gamma) interferon family. Homodimer. Strongly expressed in spleen. Also detected at lower levels in gill, kidney, heart, brain and intestine. In immune cell populations, expressed at highest levels in peripheral blood leukocytes and at lower levels in splenocytes, granulocytes, monocytes and macrophages.

The protein resides in the secreted. Its function is as follows. Cytokine which binds to interferon gamma receptor 1 (ifngr1). Has activating effects on primary macrophages. Induces nitric oxide production and phagocytic responses in macrophages. Primes monocytes for production of reactive oxygen intermediates (ROI), although the effect is short-lived. Also has inhibitory effects on monocyte priming by ifng1 (interferon gamma 1) and tnfb (TNF-alpha 2). Stimulates phosphorylation of the JAK/STAT signal transducer stat1, but fails to induce stat1 nuclear localization. Promotes increased expression of a number of genes important for macrophage activity, including the interferon regulatory factors irf2 and irf9. This Carassius auratus (Goldfish) protein is Interferon gamma-related.